A 423-amino-acid chain; its full sequence is Glycine amidinotransferase, mitochondrial (423 aa).

The transit peptide at 1–43 directs the protein to the mitochondrion; that stretch reads MLRVRCLRGGSRGAEALHYIGSRLGRTVTGWVQRTFQSTQAAT. 2 positions are modified to phosphoserine: Ser-46 and Ser-49. Asp-170 provides a ligand contact to arginine. Residues Asp-254 and His-303 contribute to the active site. Residues Asp-305, Arg-322, Ser-354, and Ser-355 each coordinate arginine. Lys-385 is subject to N6-acetyllysine. Cys-407 (amidino-cysteine intermediate) is an active-site residue.

Belongs to the amidinotransferase family. In terms of assembly, homodimer. Kidney. Expressed biallelically in placenta.

The protein localises to the mitochondrion inner membrane. It catalyses the reaction L-arginine + glycine = guanidinoacetate + L-ornithine. The enzyme catalyses 4-aminobutanoate + L-arginine = 4-guanidinobutanoate + L-ornithine. The catalysed reaction is beta-alanine + L-arginine = 3-guanidinopropanoate + L-ornithine. It carries out the reaction taurine + L-arginine = taurocyamine + L-ornithine. It functions in the pathway amine and polyamine biosynthesis; creatine biosynthesis; creatine from L-arginine and glycine: step 1/2. Transamidinase that catalyzes the transfer of the amidino group of L-arginine onto the amino moiety of acceptor metabolites such as glycine, beta-alanine, gamma-aminobutyric acid (GABA) and taurine yielding the corresponding guanidine derivatives. Catalyzes the rate-limiting step of creatine biosynthesis, namely the transfer of the amidino group from L-arginine to glycine to generate guanidinoacetate, which is then methylated by GAMT to form creatine. Provides creatine as a source for ATP generation in tissues with high energy demands, in particular skeletal muscle, heart and brain. This Sus scrofa (Pig) protein is Glycine amidinotransferase, mitochondrial (GATM).